The following is a 351-amino-acid chain: MASNGAAAGAMAPFFPPNFLLQMQQPLPLHHQHLQDHAHGGHGGHHLLPPPPPSLSPFLPDLAMDAPPPPMYEASGGDGGGGGAASEDEEDGCGGGGGGGGGEKKRRLSVEQVRTLERSFESGNKLEPERKAQLARALGLQPRQVAIWFQNRRARWKTKQLEKDFDALRRQLDAARAENDALLSLNSKLHAEIVALKGGAAAAGGGGSSCRQEAASELINLNVKETEASCSNRSENSSEINLDISRPAPPPPPPPANESPVNRGIPFYASIGRGGAGGVDIDQLLLRGGHSPSPAAVTTPPPPKMELGITGNGGGADAAAAGAGSFGGLLCGAVDEQPPFWPWADGHHHFH.

Positions 34–128 are disordered; sequence LQDHAHGGHG…SFESGNKLEP (95 aa). Positions 56–65 are enriched in low complexity; it reads SPFLPDLAMD. The homeobox DNA-binding region spans 101–160; sequence GGEKKRRLSVEQVRTLERSFESGNKLEPERKAQLARALGLQPRQVAIWFQNRRARWKTKQ. Positions 114–128 are enriched in basic and acidic residues; it reads RTLERSFESGNKLEP. A leucine-zipper region spans residues 159-203; that stretch reads KQLEKDFDALRRQLDAARAENDALLSLNSKLHAEIVALKGGAAAA. The interval 227–263 is disordered; sequence EASCSNRSENSSEINLDISRPAPPPPPPPANESPVNR. The span at 228 to 240 shows a compositional bias: polar residues; the sequence is ASCSNRSENSSEI. Over residues 247–257 the composition is skewed to pro residues; it reads PAPPPPPPPAN.

The protein belongs to the HD-ZIP homeobox family. Class I subfamily. Expressed in seedlings, roots, stems, leaf sheaths and panicles.

It is found in the nucleus. Functionally, probable transcription factor. The chain is Homeobox-leucine zipper protein HOX23 (HOX23) from Oryza sativa subsp. indica (Rice).